A 199-amino-acid chain; its full sequence is Potassium-transporting ATPase KdpC subunit (199 aa).

Residues 21–43 (LALLFVCGVVYTGTVTQLGGALF) traverse the membrane as a helical segment.

This sequence belongs to the KdpC family. The system is composed of three essential subunits: KdpA, KdpB and KdpC.

It is found in the cell inner membrane. In terms of biological role, part of the high-affinity ATP-driven potassium transport (or Kdp) system, which catalyzes the hydrolysis of ATP coupled with the electrogenic transport of potassium into the cytoplasm. This subunit acts as a catalytic chaperone that increases the ATP-binding affinity of the ATP-hydrolyzing subunit KdpB by the formation of a transient KdpB/KdpC/ATP ternary complex. The polypeptide is Potassium-transporting ATPase KdpC subunit (Shewanella putrefaciens (strain CN-32 / ATCC BAA-453)).